Here is a 357-residue protein sequence, read N- to C-terminus: Guanine nucleotide-binding protein alpha-2 subunit (357 aa).

A lipid anchor (N-myristoyl glycine) is attached at G2. A lipid anchor (S-palmitoyl cysteine) is attached at C4. Residues 30–356 (NEVKLLLLGA…TQCVMKAGLY (327 aa)) enclose the G-alpha domain. The segment at 33 to 46 (KLLLLGAGESGKST) is G1 motif. GTP-binding residues include E41, S42, G43, K44, S45, and T46. Position 45 (S45) interacts with Mg(2+). S113 carries the phosphoserine modification. D154, L179, T185, G207, N272, K273, D275, and A328 together coordinate GTP. The G2 motif stretch occupies residues 177-185 (DILHTRVMT). Residue T185 coordinates Mg(2+). The tract at residues 200-209 (FRLVDVGGQR) is G3 motif. Positions 268–275 (ILFLNKSD) are G4 motif. A G5 motif region spans residues 326–331 (TCATDT).

The protein belongs to the G-alpha family. In terms of assembly, g proteins are composed of 3 units; alpha, beta and gamma. The alpha chain contains the guanine nucleotide binding site. Interacts with the RAP guanine nucleotide exchange factor glfB. Mg(2+) is required as a cofactor. In terms of processing, ser-113 is transiently phosphorylated following stimulation with extracellular cAMP.

Guanine nucleotide-binding proteins (G proteins) are involved as modulators or transducers in various transmembrane signaling systems. G alpha-2 is required for the early aggregation process and most of the known cAMP receptor-mediated responses. Interacts with downstream effector gflB, a Rap guanine nucleotide exchange factor, to regulate the balance between Ras and Rap signaling at the leading edge of chemotaxing cells. The polypeptide is Guanine nucleotide-binding protein alpha-2 subunit (gpaB) (Dictyostelium discoideum (Social amoeba)).